Reading from the N-terminus, the 3843-residue chain is NBPF family member NBPF19 (3843 aa).

Residues methionine 70–leucine 130 adopt a coiled-coil conformation. 45 Olduvai domains span residues glutamate 165–proline 257, glutamate 258–glycine 329, arginine 330–proline 421, serine 424–aspartate 479, arginine 480–lysine 572, glutamate 573–proline 665, serine 668–aspartate 723, arginine 724–lysine 816, glutamate 817–proline 909, serine 912–aspartate 967, arginine 968–lysine 1060, glutamate 1061–proline 1153, serine 1156–aspartate 1211, arginine 1212–lysine 1304, glutamate 1305–proline 1397, serine 1400–aspartate 1455, arginine 1456–lysine 1548, glutamate 1549–proline 1641, serine 1644–aspartate 1699, arginine 1700–lysine 1792, glutamate 1793–proline 1885, serine 1888–aspartate 1943, arginine 1944–lysine 2036, glutamate 2037–proline 2129, serine 2132–aspartate 2187, arginine 2188–lysine 2280, glutamate 2281–proline 2373, serine 2376–aspartate 2431, arginine 2432–lysine 2524, glutamate 2525–proline 2617, serine 2620–aspartate 2675, arginine 2676–lysine 2768, glutamate 2769–proline 2861, serine 2864–aspartate 2919, arginine 2920–lysine 3012, glutamate 3013–proline 3105, serine 3108–aspartate 3163, arginine 3164–lysine 3256, glutamate 3257–proline 3349, serine 3352–aspartate 3407, arginine 3408–lysine 3500, glutamate 3501–proline 3593, serine 3596–aspartate 3651, arginine 3652–lysine 3744, and glutamate 3745–glutamine 3843. Disordered stretches follow at residues glutamate 180–serine 203 and tryptophan 249–serine 295. Acidic residues-rich tracts occupy residues asparagine 259 to glutamate 268 and glutamate 279 to aspartate 291. Residues lysine 559 to leucine 597 are disordered. Basic residues predominate over residues glycine 560–arginine 578. The interval lysine 803 to leucine 841 is disordered. A compositionally biased stretch (basic residues) spans glycine 804–arginine 822. Residues lysine 1047 to leucine 1085 are disordered. Basic residues predominate over residues glycine 1048–arginine 1066. The interval lysine 1291–leucine 1329 is disordered. The span at glycine 1292 to arginine 1310 shows a compositional bias: basic residues. Residues lysine 1535–leucine 1573 are disordered. Positions glycine 1536–arginine 1554 are enriched in basic residues. The segment at lysine 1779 to leucine 1817 is disordered. A compositionally biased stretch (basic residues) spans glycine 1780–arginine 1798. The interval lysine 2023–leucine 2061 is disordered. Positions glycine 2024–arginine 2042 are enriched in basic residues. The tract at residues lysine 2267 to leucine 2305 is disordered. A compositionally biased stretch (basic residues) spans glycine 2268 to arginine 2286. Residues lysine 2511–leucine 2549 form a disordered region. Residues glycine 2512–arginine 2530 show a composition bias toward basic residues. The interval lysine 2755–leucine 2793 is disordered. Over residues glycine 2756–arginine 2774 the composition is skewed to basic residues. A disordered region spans residues lysine 2999–leucine 3037. The segment covering glycine 3000–arginine 3018 has biased composition (basic residues). Positions lysine 3243–leucine 3281 are disordered. Residues glycine 3244–arginine 3262 are compositionally biased toward basic residues. Residues lysine 3487 to leucine 3525 are disordered. Positions glycine 3488 to arginine 3506 are enriched in basic residues. The interval lysine 3731–leucine 3764 is disordered. Residues glycine 3732 to arginine 3750 show a composition bias toward basic residues.

The protein belongs to the NBPF family.

It is found in the cytoplasm. This is NBPF family member NBPF19 from Homo sapiens (Human).